The chain runs to 277 residues: MQIDIQSRDVFYVSDGTAITCETLGHVVLGQFPFEANEKTFPFVESEDKLSDLLKEIEISYRATGHEPLVFFSIVIPEIKLKLLDAPAHCYDVLESIVQKVQDDTKMAPKPKLQRSRSVNKDSDKYFDRIAAIEYTLAHDDGITLKGLEEADIILLGVSRSGKTPTSLYMAMQFGLRVANYPFIHDDIARLRLLPEFEIYRHKLFGLTIDAERLTEIRENRLAGSEYASDSQCLYELQTVEGLFRREAIPYINTSSLSVEEISTRILERTGLRRRLL.

ADP is bound at residue 157-164; that stretch reads GVSRSGKT.

Belongs to the pyruvate, phosphate/water dikinase regulatory protein family. PSRP subfamily.

The catalysed reaction is [pyruvate, water dikinase] + ADP = [pyruvate, water dikinase]-phosphate + AMP + H(+). The enzyme catalyses [pyruvate, water dikinase]-phosphate + phosphate + H(+) = [pyruvate, water dikinase] + diphosphate. In terms of biological role, bifunctional serine/threonine kinase and phosphorylase involved in the regulation of the phosphoenolpyruvate synthase (PEPS) by catalyzing its phosphorylation/dephosphorylation. The chain is Putative phosphoenolpyruvate synthase regulatory protein from Vibrio atlanticus (strain LGP32) (Vibrio splendidus (strain Mel32)).